We begin with the raw amino-acid sequence, 198 residues long: Beta-crystallin A1-2 (198 aa).

The tract at residues 1-13 (MAQINPLPVPLGP) is N-terminal arm. Beta/gamma crystallin 'Greek key' domains are found at residues 14-53 (WKITVYDQENFQGKRMEFTSSCANIMECGFDNIRSLKVEC) and 54-100 (GAWI…RPIC). Residues 101–106 (SANHIE) form a connecting peptide region. 2 Beta/gamma crystallin 'Greek key' domains span residues 107–148 (SKLV…KVQC) and 149–197 (GAWV…RRIQ).

It belongs to the beta/gamma-crystallin family. As to quaternary structure, homo/heterodimer, or complexes of higher-order. The structure of beta-crystallin oligomers seems to be stabilized through interactions between the N-terminal arms. Post-translationally, the N-terminus is blocked.

Functionally, crystallins are the dominant structural components of the vertebrate eye lens. This chain is Beta-crystallin A1-2, found in Aquarana catesbeiana (American bullfrog).